A 241-amino-acid polypeptide reads, in one-letter code: Large ribosomal subunit protein bL25 (241 aa).

Positions 214-241 (LDAVKAGEEGSRAQQETEEASERADQGQ) are disordered.

This sequence belongs to the bacterial ribosomal protein bL25 family. CTC subfamily. As to quaternary structure, part of the 50S ribosomal subunit; part of the 5S rRNA/L5/L18/L25 subcomplex. Contacts the 5S rRNA. Binds to the 5S rRNA independently of L5 and L18.

In terms of biological role, this is one of the proteins that binds to the 5S RNA in the ribosome where it forms part of the central protuberance. In Deinococcus geothermalis (strain DSM 11300 / CIP 105573 / AG-3a), this protein is Large ribosomal subunit protein bL25.